The primary structure comprises 428 residues: Phosphomethylpyrimidine synthase (428 aa).

Residues asparagine 66, methionine 95, tyrosine 124, histidine 163, 185–187 (SRG), 226–229 (DGLR), and glutamate 265 contribute to the substrate site. Position 269 (histidine 269) interacts with Zn(2+). Tyrosine 292 serves as a coordination point for substrate. Histidine 333 contacts Zn(2+). The [4Fe-4S] cluster site is built by cysteine 407, cysteine 410, and cysteine 414.

Belongs to the ThiC family. It depends on [4Fe-4S] cluster as a cofactor.

It carries out the reaction 5-amino-1-(5-phospho-beta-D-ribosyl)imidazole + S-adenosyl-L-methionine = 4-amino-2-methyl-5-(phosphooxymethyl)pyrimidine + CO + 5'-deoxyadenosine + formate + L-methionine + 3 H(+). The protein operates within cofactor biosynthesis; thiamine diphosphate biosynthesis. Its function is as follows. Catalyzes the synthesis of the hydroxymethylpyrimidine phosphate (HMP-P) moiety of thiamine from aminoimidazole ribotide (AIR) in a radical S-adenosyl-L-methionine (SAM)-dependent reaction. The protein is Phosphomethylpyrimidine synthase of Thermococcus kodakarensis (strain ATCC BAA-918 / JCM 12380 / KOD1) (Pyrococcus kodakaraensis (strain KOD1)).